The sequence spans 226 residues: Ribonuclease 3 (226 aa).

The RNase III domain occupies 7–129 (LPRLCRTLSY…IIGAVYLDSD (123 aa)). Glu-42 serves as a coordination point for Mg(2+). Residue Asp-46 is part of the active site. Mg(2+) is bound by residues Asp-115 and Glu-118. Residue Glu-118 is part of the active site. One can recognise a DRBM domain in the interval 156–226 (DAKTLLQEHL…AAQVLELLKK (71 aa)).

This sequence belongs to the ribonuclease III family. Homodimer. Mg(2+) is required as a cofactor.

The protein resides in the cytoplasm. The catalysed reaction is Endonucleolytic cleavage to 5'-phosphomonoester.. Functionally, digests double-stranded RNA. Involved in the processing of primary rRNA transcript to yield the immediate precursors to the large and small rRNAs (23S and 16S). Processes some mRNAs, and tRNAs when they are encoded in the rRNA operon. Processes pre-crRNA and tracrRNA of type II CRISPR loci if present in the organism. This chain is Ribonuclease 3, found in Shewanella baltica (strain OS223).